A 391-amino-acid chain; its full sequence is MSIVRMTDLDLSGKRVLIRQDLNVPIENGRITSEQRITASLPTLKRALEQGAAVMVTSHLGRPKEGVWSEADSLAPVAQRLSELLGREVPLVRDWVDGVDVQPGQLVLLENCRMNVGEGKDDEALSKKYAALCDVFVMDAFGTAHRAQASTHGVIRFAPVAAGGPLLMAELDALAQALDAPAKPLLAIVAGSKVSTKLELLASLVGKVDQLIVGGGIANTFIAAAGYNVGKSLYEPDLLDTAKKIVADAKARGADIPLPVDVVTAKQFLPDAVAEVKAVDAVAEDDLILDIGPQTAAQYAQLIENAGTVVWNGPVGVFEFEAFSKGTEALARAIASSNAFSIAGGGDTLAAVDKFDIAAQVSYISTGGGAFLEFLEGKTLPAVAALDARGA.

Substrate is bound by residues 21-23 (DLN), arginine 36, 59-62 (HLGR), arginine 113, and arginine 146. ATP is bound by residues lysine 197, glutamate 319, and 345–348 (GGDT).

This sequence belongs to the phosphoglycerate kinase family. In terms of assembly, monomer.

It is found in the cytoplasm. The catalysed reaction is (2R)-3-phosphoglycerate + ATP = (2R)-3-phospho-glyceroyl phosphate + ADP. It participates in carbohydrate degradation; glycolysis; pyruvate from D-glyceraldehyde 3-phosphate: step 2/5. The polypeptide is Phosphoglycerate kinase (Stenotrophomonas maltophilia (strain R551-3)).